A 468-amino-acid chain; its full sequence is Aldehyde dehydrogenase family 3 member B1 (468 aa).

Met-1 bears the N-acetylmethionine mark. NAD(+) is bound at residue 188–193; sequence GSPRVG. Catalysis depends on residues Glu-210 and Cys-244. Cys-463 carries the S-palmitoyl cysteine lipid modification. Position 465 is a cysteine methyl ester (Cys-465). Cys-465 carries the S-geranylgeranyl cysteine lipid modification. Residues 466–468 constitute a propeptide, removed in mature form; the sequence is TLL.

The protein belongs to the aldehyde dehydrogenase family. In terms of processing, dually lipidated in the C-terminus; prenylation occurs prior to, and is a prerequisite for palmitoylation. It is also required for activity towards long-chain substrates. In terms of tissue distribution, highest expression in kidney and lung.

It is found in the cell membrane. The catalysed reaction is an aldehyde + NADP(+) + H2O = a carboxylate + NADPH + 2 H(+). It catalyses the reaction an aldehyde + NAD(+) + H2O = a carboxylate + NADH + 2 H(+). The enzyme catalyses a long-chain fatty aldehyde + NAD(+) + H2O = a long-chain fatty acid + NADH + 2 H(+). It carries out the reaction a medium-chain fatty aldehyde + NAD(+) + H2O = a medium-chain fatty acid + NADH + 2 H(+). The catalysed reaction is octanal + NAD(+) + H2O = octanoate + NADH + 2 H(+). It catalyses the reaction nonanal + NAD(+) + H2O = nonanoate + NADH + 2 H(+). The enzyme catalyses hexadecanoate + NADH + 2 H(+) = hexadecanal + NAD(+) + H2O. It carries out the reaction (2E)-octenal + NAD(+) + H2O = (2E)-octenoate + NADH + 2 H(+). The catalysed reaction is (E)-non-2-enal + NAD(+) + H2O = (E)-non-2-enoate + NADH + 2 H(+). It catalyses the reaction (E)-4-hydroxynon-2-enal + NAD(+) + H2O = (E)-4-hydroxynon-2-enoate + NADH + 2 H(+). The enzyme catalyses (2E)-hexadecenal + NAD(+) + H2O = (E)-hexadec-2-enoate + NADH + 2 H(+). It carries out the reaction benzaldehyde + NAD(+) + H2O = benzoate + NADH + 2 H(+). The catalysed reaction is a medium-chain fatty aldehyde + NADP(+) + H2O = a medium-chain fatty acid + NADPH + 2 H(+). It catalyses the reaction hexanal + NADP(+) + H2O = hexanoate + NADPH + 2 H(+). The enzyme catalyses octanal + NADP(+) + H2O = octanoate + NADPH + 2 H(+). It carries out the reaction nonanal + NADP(+) + H2O = nonanoate + NADPH + 2 H(+). The catalysed reaction is (2E)-octenal + NADP(+) + H2O = (2E)-octenoate + NADPH + 2 H(+). It catalyses the reaction (E)-non-2-enal + NADP(+) + H2O = (E)-non-2-enoate + NADPH + 2 H(+). The enzyme catalyses (E)-4-hydroxynon-2-enal + NADP(+) + H2O = (E)-4-hydroxynon-2-enoate + NADPH + 2 H(+). It carries out the reaction benzaldehyde + NADP(+) + H2O = benzoate + NADPH + 2 H(+). The protein operates within alcohol metabolism; ethanol degradation; acetate from ethanol: step 2/2. Its function is as follows. Oxidizes medium and long chain saturated and unsaturated fatty aldehydes generated in the plasma membrane into non-toxic fatty acids. May have a protective role against the cytotoxicity induced by lipid peroxidation. Short-chain fatty aldehydes are not good substrates. Can use both NADP(+) and NAD(+) as electron acceptor in vitro, however in vivo preference will depend on their tissue levels. Low activity towards acetaldehyde and 3,4-dihydroxyphenylacetaldehyde. Able to metabolize aromatic aldehydes such as benzaldehyde to their acid form. This is Aldehyde dehydrogenase family 3 member B1 (ALDH3B1) from Homo sapiens (Human).